We begin with the raw amino-acid sequence, 195 residues long: Nascent polypeptide-associated complex subunit alpha (195 aa).

Disordered stretches follow at residues 1–59 (MTGS…SRSE) and 132–153 (TREAPQLKTVEEDENEDVEEDS). Over residues 7–16 (TRQKEVKEPQ) the composition is skewed to basic and acidic residues. Over residues 19–33 (VSDDSDNEAVEQELT) the composition is skewed to acidic residues. Residues 47–59 (DHIDKQAKQSRSE) are compositionally biased toward basic and acidic residues. Residues 56 to 121 (SRSEKKARKL…AKIEDLTQHA (66 aa)) form the NAC-A/B domain. Residues 142–153 (EEDENEDVEEDS) are compositionally biased toward acidic residues.

The protein belongs to the NAC-alpha family. In terms of assembly, may be part of the nascent polypeptide-associated complex (NAC), which is a heterodimer of icd-2 and icd-1 (via NAC-A/B domains).

It localises to the cytoplasm. May prevent inappropriate targeting of non-secretory polypeptides to the endoplasmic reticulum (ER). Plays a role in the response to heat stress. This chain is Nascent polypeptide-associated complex subunit alpha, found in Caenorhabditis elegans.